The following is a 540-amino-acid chain: Eukaryotic translation initiation factor 3 subunit L (540 aa).

In terms of domain architecture, PCI spans 307-515; it reads TFSDILLYIQ…IHIADTKVSH (209 aa).

This sequence belongs to the eIF-3 subunit L family. As to quaternary structure, component of the eukaryotic translation initiation factor 3 (eIF-3) complex. The eIF-3 complex interacts with pix.

It is found in the cytoplasm. Its function is as follows. Component of the eukaryotic translation initiation factor 3 (eIF-3) complex, which is involved in protein synthesis of a specialized repertoire of mRNAs and, together with other initiation factors, stimulates binding of mRNA and methionyl-tRNAi to the 40S ribosome. The eIF-3 complex specifically targets and initiates translation of a subset of mRNAs involved in cell proliferation. The sequence is that of Eukaryotic translation initiation factor 3 subunit L from Drosophila grimshawi (Hawaiian fruit fly).